The primary structure comprises 76 residues: MSVEEKVKKIIMDQLGVSAEEVKPEASFVEDLGADSLDLTELIMAMEEEFGTEIDDDDAQKILKVKDAIDYIAGKQ.

The region spanning 1-76 (MSVEEKVKKI…DAIDYIAGKQ (76 aa)) is the Carrier domain. Ser-36 carries the O-(pantetheine 4'-phosphoryl)serine modification.

It belongs to the acyl carrier protein (ACP) family. In terms of processing, 4'-phosphopantetheine is transferred from CoA to a specific serine of apo-ACP by AcpS. This modification is essential for activity because fatty acids are bound in thioester linkage to the sulfhydryl of the prosthetic group.

The protein localises to the cytoplasm. The protein operates within lipid metabolism; fatty acid biosynthesis. Functionally, carrier of the growing fatty acid chain in fatty acid biosynthesis. This chain is Acyl carrier protein, found in Oleidesulfovibrio alaskensis (strain ATCC BAA-1058 / DSM 17464 / G20) (Desulfovibrio alaskensis).